The chain runs to 559 residues: Small ribosomal subunit protein bS1 (559 aa).

S1 motif domains lie at 21–87 (GAII…LSRE), 105–171 (DEVV…VSRR), 192–260 (GQQV…LGLK), 277–347 (GTRV…LGIK), 364–434 (GDRI…LGIK), and 451–520 (GSIV…LSVK).

It belongs to the bacterial ribosomal protein bS1 family.

Functionally, binds mRNA; thus facilitating recognition of the initiation point. It is needed to translate mRNA with a short Shine-Dalgarno (SD) purine-rich sequence. The sequence is that of Small ribosomal subunit protein bS1 (rpsA) from Pseudomonas aeruginosa (strain ATCC 15692 / DSM 22644 / CIP 104116 / JCM 14847 / LMG 12228 / 1C / PRS 101 / PAO1).